Reading from the N-terminus, the 152-residue chain is Adrenodoxin-like protein 2, mitochondrial (152 aa).

The N-terminal 29 residues, 1 to 29 (MLVINSCRAASRLALRSLNLRSPIATRTF), are a transit peptide targeting the mitochondrion. Positions 41-146 (VNITFVRANG…GLEVHVPSTI (106 aa)) constitute a 2Fe-2S ferredoxin-type domain. Cys-80, Cys-86, Cys-89, and Cys-127 together coordinate [2Fe-2S] cluster.

Belongs to the adrenodoxin/putidaredoxin family. [2Fe-2S] cluster serves as cofactor.

Its subcellular location is the mitochondrion. Functionally, required for ecdysteroidogenesis in the prothoracic gland which is necessary for larval to pupal transition. The protein is Adrenodoxin-like protein 2, mitochondrial of Drosophila melanogaster (Fruit fly).